Here is a 374-residue protein sequence, read N- to C-terminus: Cysteine-type anaerobic sulfatase-maturating enzyme (374 aa).

Residues 1 to 227 (MKSLSMLIKP…LNKLFDLWFK (227 aa)) enclose the Radical SAM core domain. [4Fe-4S] cluster contacts are provided by Cys15 and Cys19. Tyr21 contacts S-adenosyl-L-methionine. Cys22 provides a ligand contact to [4Fe-4S] cluster. S-adenosyl-L-methionine is bound by residues Gly66, Ser122, Arg134, and Leu195. Residues Cys255, Cys261, and Cys276 each contribute to the [4Fe-4S] cluster site. The active-site Proton acceptor is Asp277. [4Fe-4S] cluster is bound by residues Cys317, Cys320, Cys326, Cys330, and Cys348.

The protein belongs to the radical SAM superfamily. Anaerobic sulfatase-maturating enzyme family. [4Fe-4S] cluster is required as a cofactor.

The catalysed reaction is L-cysteinyl-[sulfatase] + S-adenosyl-L-methionine + H2O = 3-oxo-L-alanyl-[sulfatase] + hydrogen sulfide + 5'-deoxyadenosine + L-methionine + 2 H(+). It functions in the pathway protein modification; sulfatase oxidation. Functionally, involved in 'Cys-type' sulfatase maturation under anaerobic conditions. Catalyzes the post-translational modification of cysteine into 3-oxoalanine (also known as C(alpha)-formylglycine (FGly)), by a free radical chemical mechanism initiated via the reductive cleavage of S-adenosyl-L-methionine (SAM). The sequence is that of Cysteine-type anaerobic sulfatase-maturating enzyme from Clostridium novyi (strain NT).